Here is a 1588-residue protein sequence, read N- to C-terminus: MSWKRNYFSGSRGSVQGMFAPRSSMSIAPSKGLSNEPGQNSCFLNSALQVLWHLDIFRRSFRQLTTHKCMGDSCIFCALKGIFNQFQCSSEKVLPSDTLRSALAKTFQDEQRFQLGIMDDAAECFENLLMRIHFHIADETKEDICTAQHCISHQKFAMTLFEQCVCSSCGATSDPLPFIQMVHYISTTALCNQAICMLEKREKPSPSMFGELLQNASTMGDLRNCPSNCGERIRIRRVLMNAPQIITIGLVWDSEHSDLAEDVIHSLGTCLKLGDLFFRVTDDRAKQSELYLVGMICYYGKHYSTFFFQTKIRKWMYFDDAHVKEIGPKWKDVVTKCIKGHYQPLLLLYADPQGTPVSAQDLPPHAQFLPYTKTCYDSEDSGHLTDSECNQKHTSKKGSLVERRRSSGRVRRKGDEPQASGYHSEGETLKEKQAPRNASKSSSSSRLKDFKETVSNMIHSRPSLASQTSAGSPCVGRAGDQLDKIPPRNFPLQARGWETESTSSEAKSSSSSKYRPTWRPKRESLNIDSIFSKDRRKHCGYTQLRTFPEDAAKEFTPDEVSKPTANDIKDGGSRSQHKLWGTARPGSHLLEQHPRLIQRMESGYESSERNSSSPVSLDAAPPDSVNVYRDQSTKRPVGFVPSWRHIPKSHSSSILEVDCTAPMTSWTKTQPLSDGEVTSRSELDELQEEVVRRAQEQELRKKREKELEAAKGFNPHPSRYMDLDELQNQGRSDGFERSLQEANSIFEESLHLEQKGDCAAALALCNEAISKLRLTLHDASSSTHSRALVDKKLQISIRKARSLQDRMQQQASSQQPVQPSASLPSQGGALPQPTSEQPITLQVLLNQEAQLEPCKDTELGATSSFFHSPASCPELHSSLIPESPVSSVSQHSPPGTSSLKLLTSFEVDSVNRSAFHRQGLPKATGRTEMNSQHECLPLDALEDRLQGHREDNSCCSKFPPREGRDIAQDQLFEGKKNPADISMGMPWSYSTGEATSERVIYSLNSPSSSSAQPSIPPYSSCHPITSAASSPVLHAADPMQKLNQHVQAQSLQTSLTSKVVRSSEEPYRLEFPSTKGLVRSLAEQFQKMQNTSTRDVIGSQDRSLPNGVRKSSSPSDFMPPLSQGPGREHCRWVKQPRSPDGRERPPCWEDPAAHPPLSMGSGLPDGETSRTAQPRLAEPDMYQGKLPQVTDIRSKELGSSVNLGTSLPLDSWVNVTRLCDSQVKPSAPGPGDKSSSHDSHPRATCLERSPILLHPHWDQDTEQETSELESLYQASLQASSHTAYSDWRSQDVAWQPLSLAGSADGMGRRLHSAPGLDLSKPLTAEMEHVLYEPSTVPVSQDSSNVRKKTLETGHHCSSSSSLPVIHDPPVFLLDPKLYPPQPQFLSPDVLMPSMAGEPYRPPGTSRSVHQFLAMCDRDETPQGVKYTGRTLNYRSLPHRSRTDASWGPGSETNQHIGARVLTMPACKPQLTYTATLPERHQGLQVPHAQSWGNLFHSPSHPSAVHPGSPPSSNLHVPLRSTWNSGPVLGSRTPGPRRIDMPPDDDWRQSSYPSQDRHRSPGEERIMFALSNAAGREQNRVRFLQHSRW.

Arg-12 is modified (omega-N-methylarginine). Residues 31–352 enclose the USP domain; it reads KGLSNEPGQN…QPLLLLYADP (322 aa). The Nucleophile role is filled by Cys-42. Residues His-67, Cys-69, Cys-74, Cys-77, His-133, Cys-145, Cys-150, His-153, Cys-166, Cys-169, Cys-225, and Cys-229 each coordinate Zn(2+). Catalysis depends on His-302, which acts as the Proton acceptor. Composition is skewed to basic and acidic residues over residues 382 to 391 and 424 to 434; these read GHLTDSECNQ and SEGETLKEKQA. Disordered stretches follow at residues 382–519, 555–577, and 601–624; these read GHLT…PTWR, FTPD…RSQH, and ESGY…PPDS. Ser-424 bears the Phosphoserine mark. Residues 453-471 are compositionally biased toward polar residues; sequence TVSNMIHSRPSLASQTSAG. Residues 499 to 513 show a composition bias toward low complexity; sequence TESTSSEAKSSSSSK. Basic and acidic residues predominate over residues 555 to 572; the sequence is FTPDEVSKPTANDIKDGG. Over residues 601 to 616 the composition is skewed to low complexity; the sequence is ESGYESSERNSSSPVS. A phosphoserine mark is found at Ser-613 and Ser-616. The stretch at 682–712 forms a coiled coil; that stretch reads ELDELQEEVVRRAQEQELRKKREKELEAAKG. 4 disordered regions span residues 801 to 834, 1089 to 1182, 1221 to 1242, and 1491 to 1561; these read RSLQ…PQPT, QNTS…PDMY, SQVK…SHPR, and WGNL…RSPG. Residues 808–826 show a composition bias toward low complexity; it reads QQQASSQQPVQPSASLPSQ. The span at 1126 to 1147 shows a compositional bias: basic and acidic residues; it reads GREHCRWVKQPRSPDGRERPPC. Position 1138 is a phosphoserine (Ser-1138). Positions 1510-1524 are enriched in polar residues; that stretch reads PSSNLHVPLRSTWNS. The segment covering 1536 to 1547 has biased composition (basic and acidic residues); that stretch reads RRIDMPPDDDWR.

Belongs to the peptidase C19 family.

The catalysed reaction is Thiol-dependent hydrolysis of ester, thioester, amide, peptide and isopeptide bonds formed by the C-terminal Gly of ubiquitin (a 76-residue protein attached to proteins as an intracellular targeting signal).. Its function is as follows. Deubiquitinase that specifically mediates 'Lys-63'-linked deubiquitination of substrates with a polyubiquitin chain composed of at least 3 ubiquitins. Specifically recognizes ubiquitin chain in position S2 and catalyzes cleavage of polyubiquitin within 'Lys-63'-linked chains. Not able to deubiquitinate substrates with shorter ubiquitin chains. Mediates deubiquitination of PLK4, maintaining PLK4 stability by reducing its ubiquitination-mediated degradation. The protein is Ubiquitin carboxyl-terminal hydrolase 54 (Usp54) of Mus musculus (Mouse).